Consider the following 368-residue polypeptide: POU domain, class 3, transcription factor 1 (368 aa).

The segment covering 1 to 16 has biased composition (polar residues); that stretch reads MATTAQYIPRNNSLPS. 4 disordered regions span residues 1 to 28, 69 to 88, 100 to 134, and 147 to 193; these read MATT…DRMH, TDWT…ASVQ, SHLV…NGHQ, and SPQP…PSSD. The segment covering 79–88 has biased composition (basic and acidic residues); sequence QAEHNKASVQ. The segment covering 105–134 has biased composition (polar residues); it reads QPTQNSHHGSWAPTTTHHLSPLSPASNGHQ. A compositionally biased stretch (basic and acidic residues) spans 155–170; sequence GLRDPLHDDAGSHDNQ. A POU-specific domain is found at 187–261; the sequence is EDAPSSDDLE…LLNKWLEETD (75 aa). Positions 279-338 form a DNA-binding region, homeobox; that stretch reads KRKKRTSIEVGVKGALENHFLKCPKPSAHEITTLAGTLQLEKEVVRVWFCNRRQKEKRMT.

This sequence belongs to the POU transcription factor family. Class-3 subfamily. Predominantly expressed in the embryonic and adult central nervous system.

The protein localises to the nucleus. In terms of biological role, transcription factor that may play important roles in patterning the embryonic brain. Could directly respond to the reception of the sonic hedgehog (shh) signal. The sequence is that of POU domain, class 3, transcription factor 1 (pou3f1) from Danio rerio (Zebrafish).